Consider the following 577-residue polypeptide: Nuclear fusion protein tht1 (577 aa).

The N-terminal stretch at 1 to 29 is a signal peptide; that stretch reads MKFHPTRPFGLYFEFFIIISFFFTSESTG. At 30–404 the chain is on the lumenal side; sequence DVESFMKYSN…MNVYFKGLSN (375 aa). N-linked (GlcNAc...) asparagine glycans are attached at residues Asn163 and Asn372. Residues 405-425 traverse the membrane as a helical segment; that stretch reads IISSFAFIGFTLFATLSSLFF. Residues 426 to 433 lie on the Cytoplasmic side of the membrane; that stretch reads KVLKIHRR. Residues 434 to 454 form a helical membrane-spanning segment; the sequence is PIIVFGSLSIIFIHIYCFKIT. Residues 455-470 are Lumenal-facing; it reads SWVNLYGWITCTIART. A helical membrane pass occupies residues 471-491; that stretch reads LSFIKLNIRTFYLTAFLCALL. The Cytoplasmic segment spans residues 492-577; sequence NFLRYLKYRN…ESLEQSPWWD (86 aa).

This sequence belongs to the KAR5 family. N-glycosylated.

The protein resides in the endoplasmic reticulum membrane. Its subcellular location is the nucleus membrane. Required for nuclear membrane fusion during karyogamy. The polypeptide is Nuclear fusion protein tht1 (tht1) (Schizosaccharomyces pombe (strain 972 / ATCC 24843) (Fission yeast)).